Consider the following 224-residue polypeptide: 7-cyano-7-deazaguanine synthase (224 aa).

8–18 (CSGGLDSTVAA) is a binding site for ATP. Zn(2+) is bound by residues cysteine 190, cysteine 198, cysteine 201, and cysteine 204.

This sequence belongs to the QueC family. Zn(2+) is required as a cofactor.

The enzyme catalyses 7-carboxy-7-deazaguanine + NH4(+) + ATP = 7-cyano-7-deazaguanine + ADP + phosphate + H2O + H(+). The protein operates within purine metabolism; 7-cyano-7-deazaguanine biosynthesis. In terms of biological role, catalyzes the ATP-dependent conversion of 7-carboxy-7-deazaguanine (CDG) to 7-cyano-7-deazaguanine (preQ(0)). The sequence is that of 7-cyano-7-deazaguanine synthase from Methanothrix thermoacetophila (strain DSM 6194 / JCM 14653 / NBRC 101360 / PT) (Methanosaeta thermophila).